The chain runs to 465 residues: UPF0324 membrane protein CC_0425 (465 aa).

Residues 97–132 are disordered; it reads HRQPDRAPPARASEQPLRQGRRALRRRPDQRRHRPR. Over residues 115 to 132 the composition is skewed to basic residues; that stretch reads QGRRALRRRPDQRRHRPR. The next 10 membrane-spanning stretches (helical) occupy residues 135-157, 172-194, 219-241, 251-273, 286-308, 318-340, 352-374, 378-400, 405-427, and 442-464; these read AAAL…LMAV, LLAV…GAGL, AALG…GIGA, LAEA…LAAS, TALV…PPIA, AGVF…ASVS, LSRI…RTAQ, ISGL…ARGL, PALV…GAIS, and LAIL…TRIF.

This sequence belongs to the UPF0324 family.

It is found in the cell membrane. This Caulobacter vibrioides (strain ATCC 19089 / CIP 103742 / CB 15) (Caulobacter crescentus) protein is UPF0324 membrane protein CC_0425.